An 870-amino-acid polypeptide reads, in one-letter code: DNA mismatch repair protein MutS (870 aa).

616-623 provides a ligand contact to ATP; the sequence is GPNMAGKS.

This sequence belongs to the DNA mismatch repair MutS family.

Its function is as follows. This protein is involved in the repair of mismatches in DNA. It is possible that it carries out the mismatch recognition step. This protein has a weak ATPase activity. This chain is DNA mismatch repair protein MutS, found in Parabacteroides distasonis (strain ATCC 8503 / DSM 20701 / CIP 104284 / JCM 5825 / NCTC 11152).